A 25-amino-acid chain; its full sequence is Fibrinolytic enzyme large subunit (25 aa).

Residues 1–25 (VIGGTNASPGEIPWQLSQQRQSGSW) enclose the Peptidase S1 domain. A disordered region spans residues 1–25 (VIGGTNASPGEIPWQLSQQRQSGSW). Polar residues predominate over residues 15 to 25 (QLSQQRQSGSW).

This sequence belongs to the peptidase S1 family. Heterodimer of a large and a small subunit held together by hydrophobic interactions.

In terms of biological role, cleaves the carboxyl side of basic amino acids, small neutral amino acids, and Met residue. It is also a plasminogen activator. In Eisenia fetida (Red wiggler worm), this protein is Fibrinolytic enzyme large subunit.